The chain runs to 146 residues: Cystatin-C (146 aa).

Residues 1–26 (MAGPLRAPLLLLAILAVALALSPAAG) form the signal peptide. Residue S43 is modified to Phosphoserine. Residues 81–85 (QIVAG) carry the Secondary area of contact motif. 2 disulfides stabilise this stretch: C99–C109 and C123–C143.

It belongs to the cystatin family.

It localises to the secreted. Its function is as follows. As an inhibitor of cysteine proteinases, this protein is thought to serve an important physiological role as a local regulator of this enzyme activity. In Saimiri sciureus (Common squirrel monkey), this protein is Cystatin-C (CST3).